The primary structure comprises 437 residues: Epsilon-sarcoglycan (437 aa).

Residues Met1–Phe317 lie on the Extracellular side of the membrane. N-linked (GlcNAc...) asparagine glycosylation is present at Asn200. A helical membrane pass occupies residues Leu318 to Ile338. Residues Met339–Ser437 are Cytoplasmic-facing. The segment at Gln418–Ser437 is disordered.

Belongs to the sarcoglycan alpha/epsilon family. Post-translationally, N-glycosylated. Ubiquitinated, leading to its degradation by the proteasome.

It is found in the cell membrane. The protein localises to the sarcolemma. It localises to the cytoplasm. Its subcellular location is the cytoskeleton. The protein resides in the cell projection. It is found in the dendrite. The protein localises to the golgi apparatus. Component of the sarcoglycan complex, a subcomplex of the dystrophin-glycoprotein complex which forms a link between the F-actin cytoskeleton and the extracellular matrix. This chain is Epsilon-sarcoglycan (SGCE), found in Bos taurus (Bovine).